Reading from the N-terminus, the 366-residue chain is Chorismate synthase (366 aa).

Residues arginine 48 and arginine 54 each contribute to the NADP(+) site. Residues 125–127 (RSS), 238–239 (NA), glycine 278, 293–297 (KPTSS), and arginine 319 each bind FMN.

It belongs to the chorismate synthase family. Homotetramer. FMNH2 is required as a cofactor.

The catalysed reaction is 5-O-(1-carboxyvinyl)-3-phosphoshikimate = chorismate + phosphate. Its pathway is metabolic intermediate biosynthesis; chorismate biosynthesis; chorismate from D-erythrose 4-phosphate and phosphoenolpyruvate: step 7/7. In terms of biological role, catalyzes the anti-1,4-elimination of the C-3 phosphate and the C-6 proR hydrogen from 5-enolpyruvylshikimate-3-phosphate (EPSP) to yield chorismate, which is the branch point compound that serves as the starting substrate for the three terminal pathways of aromatic amino acid biosynthesis. This reaction introduces a second double bond into the aromatic ring system. This is Chorismate synthase from Herminiimonas arsenicoxydans.